The primary structure comprises 162 residues: Ribosome maturation factor RimP (162 aa).

It belongs to the RimP family.

The protein localises to the cytoplasm. Required for maturation of 30S ribosomal subunits. The protein is Ribosome maturation factor RimP of Cupriavidus pinatubonensis (strain JMP 134 / LMG 1197) (Cupriavidus necator (strain JMP 134)).